The primary structure comprises 327 residues: Taste receptor type 2 member 102 (327 aa).

The Extracellular portion of the chain corresponds to 1-7 (MEPVIYS). Residues 8–28 (FATLLIHVEFIFGNLSNGFIV) form a helical membrane-spanning segment. At 29 to 46 (LSNFWDWVIKRKLSTIDK) the chain is on the cytoplasmic side. Residues 47–67 (ILLTLAISRITLIWEIYTWFT) form a helical membrane-spanning segment. Topologically, residues 68 to 87 (SVYGPSSFAIGMKLQILYFT) are extracellular. Residues 88 to 108 (WILSSHFSLWFATALSIFYLL) traverse the membrane as a helical segment. The Cytoplasmic portion of the chain corresponds to 109-124 (RIANCSWKIFLYLKWR). The helical transmembrane segment at 125–145 (LKQVIVGMLLASLVFLPGILT) threads the bilayer. Topologically, residues 146–179 (QRTLEERPYRYGGNTSEDSMETDFARFTELILFN) are extracellular. N-linked (GlcNAc...) asparagine glycosylation is found at asparagine 159 and asparagine 179. Residues 180–200 (LTIFSVIPFSLASISFLLLIF) form a helical membrane-spanning segment. Residues 201 to 229 (SLWKHLRKMQLSSRGHGDPSTKAHTNALR) are Cytoplasmic-facing. A helical transmembrane segment spans residues 230–250 (IMVSFLLLYSIYFLSLLLSWI). Residues 251 to 260 (AQKHHSKLVD) lie on the Extracellular side of the membrane. Residues 261–281 (IIGIITGLMYPSAHSFILILG) traverse the membrane as a helical segment. At 282-327 (NSKLMQTSLWILSHLRCRLKGENILNPSGNQVTSCYIFCIANKSVS) the chain is on the cytoplasmic side.

The protein belongs to the G-protein coupled receptor T2R family.

It localises to the membrane. Putative taste receptor which may play a role in the perception of bitterness. The protein is Taste receptor type 2 member 102 of Rattus norvegicus (Rat).